Consider the following 68-residue polypeptide: Conotoxin Am6.8 (68 aa).

The signal sequence occupies residues 1–24 (MIRMGFFLTLTVAVLLTSLTCSEA). The propeptide occupies 25–45 (VPTDKREMERLFDRILLKDQR). The residue at position 46 (Gln46) is a Pyrrolidone carboxylic acid. 3 cysteine pairs are disulfide-bonded: Cys47–Cys55, Cys50–Cys60, and Cys54–Cys65.

The protein belongs to the conotoxin U superfamily. As to expression, expressed by the venom duct.

It is found in the secreted. Its function is as follows. Probable toxin. The polypeptide is Conotoxin Am6.8 (Conus amadis (Amadis cone)).